Here is a 54-residue protein sequence, read N- to C-terminus: MLDNALLGLTHEQQQEAVEKIQQLMAEGMSSGEAIAFVAQELRQKQQKLNNTHS.

It belongs to the UPF0181 family.

This chain is UPF0181 protein PM0480, found in Pasteurella multocida (strain Pm70).